The primary structure comprises 284 residues: Phosphatidylglycerol--prolipoprotein diacylglyceryl transferase (284 aa).

7 helical membrane passes run 21–41 (IEVH…FYMA), 62–82 (YFLW…ILIY), 106–126 (FVGI…IASY), 136–156 (LLIY…FGRI), 190–210 (PSQL…VMWA), 218–238 (GLLI…AEFY), and 252–272 (LSMG…ILLY). R155 contributes to the a 1,2-diacyl-sn-glycero-3-phospho-(1'-sn-glycerol) binding site.

The protein belongs to the Lgt family.

It localises to the cell inner membrane. It carries out the reaction L-cysteinyl-[prolipoprotein] + a 1,2-diacyl-sn-glycero-3-phospho-(1'-sn-glycerol) = an S-1,2-diacyl-sn-glyceryl-L-cysteinyl-[prolipoprotein] + sn-glycerol 1-phosphate + H(+). It participates in protein modification; lipoprotein biosynthesis (diacylglyceryl transfer). Functionally, catalyzes the transfer of the diacylglyceryl group from phosphatidylglycerol to the sulfhydryl group of the N-terminal cysteine of a prolipoprotein, the first step in the formation of mature lipoproteins. This chain is Phosphatidylglycerol--prolipoprotein diacylglyceryl transferase, found in Helicobacter pylori (strain P12).